Consider the following 195-residue polypeptide: MGDQRQRSLSTSGDSLYIVLGLDKNASPEDIKKSYRKLALKYHPDKNPDNPEASEKFKEINNAHAILTDATKRNIYDKYGSLGLYVAEQFGEENVNTYFVLSSWWAKALFVFCGVITGCYFCCCLCCCCNCCCGKCKPKPPEGEEQEYYVSPEDLEAQLQSDMEKEGDGAIVVQPTSATETTQLTSDSHPSYHTE.

The J domain occupies 13-82 (GDSLYIVLGL…RNIYDKYGSL (70 aa)). A disordered region spans residues 162 to 195 (DMEKEGDGAIVVQPTSATETTQLTSDSHPSYHTE). Positions 174–189 (QPTSATETTQLTSDSH) are enriched in polar residues.

Post-translationally, palmitoylated. Palmitoylation occurs probably in the cysteine-rich domain and regulates DNAJC5 stable membrane attachment.

The protein resides in the cytoplasm. It is found in the cytosol. The protein localises to the membrane. Its subcellular location is the cytoplasmic vesicle. It localises to the secretory vesicle. The protein resides in the chromaffin granule membrane. It is found in the melanosome. The protein localises to the cell membrane. Its function is as follows. May have an important role in presynaptic function. May be involved in calcium-dependent neurotransmitter release at nerve endings. The protein is DnaJ homolog subfamily C member 5 of Tetronarce californica (Pacific electric ray).